Here is a 632-residue protein sequence, read N- to C-terminus: Putative golgin subfamily A member 8I (632 aa).

The interval 1–77 is disordered; that stretch reads MAEETQHNKL…SSATLKDLES (77 aa). Polar residues predominate over residues 38–50; sequence TNGSIPQTATSGG. Coiled coils occupy residues 86 to 154 and 209 to 421; these read LDSR…HMKR and KLEQ…SLMA. A compositionally biased stretch (basic and acidic residues) spans 352–362; the sequence is KQEERIQEQHK. Disordered regions lie at residues 352 to 383, 423 to 445, 496 to 524, and 550 to 569; these read KQEERIQEQHKSLQQLAKPQSVFEEPNNENKS, PGEGHGGEHLDSEGEEAPQPMPS, LSEPGGRAKDAALGGGHHQAGAQGGDEGE, and AHNPADEPGPGAPAPQELGA. Gly residues predominate over residues 508 to 520; sequence LGGGHHQAGAQGG. Residues 529–632 form a golgi-targeting domain region; that stretch reads AADGIAAYSN…CWAWLPRRRR (104 aa). Over residues 555 to 568 the composition is skewed to low complexity; that stretch reads DEPGPGAPAPQELG.

It belongs to the GOLGA8 family.

Its subcellular location is the golgi apparatus. It is found in the golgi stack membrane. May be involved in maintaining Golgi structure. This is Putative golgin subfamily A member 8I from Homo sapiens (Human).